Consider the following 431-residue polypeptide: O-phosphoseryl-tRNA(Sec) selenium transferase (431 aa).

Residues 1–36 (MRGLIPDHMLERGRTVLDSYREPVERLLSERRMPEE) form a tetramerization region. Arginine 67 contributes to the pyridoxal 5'-phosphate binding site. The segment at 88-98 (GRSGTLVDPQP) is phosphate loop (P-loop). Residues arginine 89, serine 90, and glutamine 97 each coordinate substrate. Lysine 269 is subject to N6-(pyridoxal phosphate)lysine. Residue arginine 298 coordinates substrate.

It belongs to the SepSecS family. In terms of assembly, homotetramer. Requires pyridoxal 5'-phosphate as cofactor.

It carries out the reaction O-phospho-L-seryl-tRNA(Sec) + selenophosphate + H2O = L-selenocysteinyl-tRNA(Sec) + 2 phosphate. It participates in aminoacyl-tRNA biosynthesis; selenocysteinyl-tRNA(Sec) biosynthesis; selenocysteinyl-tRNA(Sec) from L-seryl-tRNA(Sec) (archaeal/eukaryal route): step 2/2. Converts O-phosphoseryl-tRNA(Sec) to selenocysteinyl-tRNA(Sec) required for selenoprotein biosynthesis. The chain is O-phosphoseryl-tRNA(Sec) selenium transferase (spcS) from Methanopyrus kandleri (strain AV19 / DSM 6324 / JCM 9639 / NBRC 100938).